The following is a 636-amino-acid chain: DNA mismatch repair protein MutL (636 aa).

Residues 332–344 (HAGEQGDSLRTDI) are compositionally biased toward basic and acidic residues. Disordered regions lie at residues 332 to 360 (HAGE…PADN) and 417 to 443 (ASAP…SDDA). Over residues 417 to 437 (ASAPADAAPAQASEPAAAPQA) the composition is skewed to low complexity.

The protein belongs to the DNA mismatch repair MutL/HexB family.

Functionally, this protein is involved in the repair of mismatches in DNA. It is required for dam-dependent methyl-directed DNA mismatch repair. May act as a 'molecular matchmaker', a protein that promotes the formation of a stable complex between two or more DNA-binding proteins in an ATP-dependent manner without itself being part of a final effector complex. This chain is DNA mismatch repair protein MutL, found in Ralstonia nicotianae (strain ATCC BAA-1114 / GMI1000) (Ralstonia solanacearum).